The primary structure comprises 369 residues: Sesquiterpene cyclase hepA (369 aa).

Residues aspartate 100, asparagine 248, serine 252, and aspartate 256 each coordinate Mg(2+). A DDXXD motif motif is present at residues 100 to 104 (DDEID). The (N,D)D(L,I,V)X(S,T)XXXE motif motif lies at 255–262 (NDLLSLRK).

This sequence belongs to the terpene synthase family. Mg(2+) serves as cofactor.

Functionally, sesquiterpene cyclase; part of the gene cluster that mediates the biosynthesis of heptelidic acid (HA), a sesquiterpene lactone that acts as an inhibitor of glyceraldehyde-3-phosphatedehydrogenase (GAPDH) and a growth inhibitor of the salt-tolerant lactic acid bacteria in soy sauce brewing. The chain is Sesquiterpene cyclase hepA from Aspergillus oryzae (strain ATCC 42149 / RIB 40) (Yellow koji mold).